Consider the following 438-residue polypeptide: Transposon Ty2-OR2 Gag polyprotein (438 aa).

3 disordered regions span residues 1–88 (MESQ…YQQH), 365–397 (NVSR…AKAH), and 419–438 (SSQY…TERI). 2 stretches are compositionally biased toward polar residues: residues 19 to 39 (ASVT…SASN) and 49 to 60 (KVNSQEETTPGT). Residues 295–397 (ENNINVSDRL…SSKPRAAKAH (103 aa)) are RNA-binding. A compositionally biased stretch (low complexity) spans 369–381 (TSPNTTNTKVTTR).

As to quaternary structure, homotrimer.

The protein localises to the cytoplasm. Functionally, capsid protein (CA) is the structural component of the virus-like particle (VLP), forming the shell that encapsulates the retrotransposons dimeric RNA genome. The particles are assembled from trimer-clustered units and there are holes in the capsid shells that allow for the diffusion of macromolecules. CA also has nucleocapsid-like chaperone activity, promoting primer tRNA(i)-Met annealing to the multipartite primer-binding site (PBS), dimerization of Ty2 RNA and initiation of reverse transcription. In Saccharomyces cerevisiae (strain ATCC 204508 / S288c) (Baker's yeast), this protein is Transposon Ty2-OR2 Gag polyprotein (TY2A-OR2).